A 109-amino-acid polypeptide reads, in one-letter code: Putative double-stranded DNA mimic protein YciU (109 aa).

This sequence belongs to the putative dsDNA mimic protein family.

Functionally, may act as a double-stranded DNA (dsDNA) mimic. Probably regulates the activity of a dsDNA-binding protein. The polypeptide is Putative double-stranded DNA mimic protein YciU (Salmonella paratyphi B (strain ATCC BAA-1250 / SPB7)).